A 336-amino-acid polypeptide reads, in one-letter code: D-erythrose-4-phosphate dehydrogenase (336 aa).

Residue 11–12 (RI) participates in NAD(+) binding. Substrate is bound by residues 153-155 (SCT), Arg199, 212-213 (TR), and Arg235. Cys154 serves as the catalytic Nucleophile. Residue Asn317 coordinates NAD(+).

It belongs to the glyceraldehyde-3-phosphate dehydrogenase family. Epd subfamily. As to quaternary structure, homotetramer.

It localises to the cytoplasm. The enzyme catalyses D-erythrose 4-phosphate + NAD(+) + H2O = 4-phospho-D-erythronate + NADH + 2 H(+). It participates in cofactor biosynthesis; pyridoxine 5'-phosphate biosynthesis; pyridoxine 5'-phosphate from D-erythrose 4-phosphate: step 1/5. In terms of biological role, catalyzes the NAD-dependent conversion of D-erythrose 4-phosphate to 4-phosphoerythronate. This Alteromonas mediterranea (strain DSM 17117 / CIP 110805 / LMG 28347 / Deep ecotype) protein is D-erythrose-4-phosphate dehydrogenase.